Reading from the N-terminus, the 300-residue chain is Ribosomal RNA small subunit methyltransferase H (300 aa).

S-adenosyl-L-methionine contacts are provided by residues 43–45 (AGH), Asp-60, Asp-105, and Gln-112.

Belongs to the methyltransferase superfamily. RsmH family.

The protein localises to the cytoplasm. It catalyses the reaction cytidine(1402) in 16S rRNA + S-adenosyl-L-methionine = N(4)-methylcytidine(1402) in 16S rRNA + S-adenosyl-L-homocysteine + H(+). Specifically methylates the N4 position of cytidine in position 1402 (C1402) of 16S rRNA. The polypeptide is Ribosomal RNA small subunit methyltransferase H (Deinococcus deserti (strain DSM 17065 / CIP 109153 / LMG 22923 / VCD115)).